The primary structure comprises 320 residues: ATP-dependent 6-phosphofructokinase (320 aa).

An ATP-binding site is contributed by Gly12. ADP is bound by residues Arg22–Arg26 and Arg55–Asp60. Residues Arg73–Phe74 and Gly103–Ser106 contribute to the ATP site. Asp104 contributes to the Mg(2+) binding site. Residue Thr126 to Asp128 participates in substrate binding. Asp128 acts as the Proton acceptor in catalysis. ADP is bound at residue Arg155. Substrate contacts are provided by residues Arg163 and Met170–Arg172. ADP-binding positions include Gly186 to Glu188 and Lys214 to His216. Residues Glu223, Arg244, and His250–Arg253 each bind substrate.

The protein belongs to the phosphofructokinase type A (PFKA) family. ATP-dependent PFK group I subfamily. Prokaryotic clade 'B1' sub-subfamily. In terms of assembly, homotetramer. Requires Mg(2+) as cofactor.

Its subcellular location is the cytoplasm. The enzyme catalyses beta-D-fructose 6-phosphate + ATP = beta-D-fructose 1,6-bisphosphate + ADP + H(+). Its pathway is carbohydrate degradation; glycolysis; D-glyceraldehyde 3-phosphate and glycerone phosphate from D-glucose: step 3/4. With respect to regulation, allosterically activated by ADP and other diphosphonucleosides, and allosterically inhibited by phosphoenolpyruvate. Catalyzes the phosphorylation of D-fructose 6-phosphate to fructose 1,6-bisphosphate by ATP, the first committing step of glycolysis. The sequence is that of ATP-dependent 6-phosphofructokinase from Baumannia cicadellinicola subsp. Homalodisca coagulata.